We begin with the raw amino-acid sequence, 289 residues long: Ribosomal protein L11 methyltransferase (289 aa).

Positions 142, 163, 185, and 226 each coordinate S-adenosyl-L-methionine.

It belongs to the methyltransferase superfamily. PrmA family.

It localises to the cytoplasm. The catalysed reaction is L-lysyl-[protein] + 3 S-adenosyl-L-methionine = N(6),N(6),N(6)-trimethyl-L-lysyl-[protein] + 3 S-adenosyl-L-homocysteine + 3 H(+). In terms of biological role, methylates ribosomal protein L11. This chain is Ribosomal protein L11 methyltransferase, found in Legionella pneumophila (strain Corby).